Consider the following 494-residue polypeptide: Probable cytosol aminopeptidase (494 aa).

Residues Lys260 and Asp265 each coordinate Mn(2+). Lys272 is an active-site residue. Asp283, Asp342, and Glu344 together coordinate Mn(2+). Arg346 is an active-site residue.

Belongs to the peptidase M17 family. It depends on Mn(2+) as a cofactor.

The protein resides in the cytoplasm. It carries out the reaction Release of an N-terminal amino acid, Xaa-|-Yaa-, in which Xaa is preferably Leu, but may be other amino acids including Pro although not Arg or Lys, and Yaa may be Pro. Amino acid amides and methyl esters are also readily hydrolyzed, but rates on arylamides are exceedingly low.. It catalyses the reaction Release of an N-terminal amino acid, preferentially leucine, but not glutamic or aspartic acids.. Its function is as follows. Presumably involved in the processing and regular turnover of intracellular proteins. Catalyzes the removal of unsubstituted N-terminal amino acids from various peptides. In Bacillus anthracis (strain CDC 684 / NRRL 3495), this protein is Probable cytosol aminopeptidase.